Consider the following 166-residue polypeptide: Large ribosomal subunit protein uL10 (166 aa).

The protein belongs to the universal ribosomal protein uL10 family. In terms of assembly, part of the ribosomal stalk of the 50S ribosomal subunit. The N-terminus interacts with L11 and the large rRNA to form the base of the stalk. The C-terminus forms an elongated spine to which L12 dimers bind in a sequential fashion forming a multimeric L10(L12)X complex.

Its function is as follows. Forms part of the ribosomal stalk, playing a central role in the interaction of the ribosome with GTP-bound translation factors. The sequence is that of Large ribosomal subunit protein uL10 from Phytoplasma australiense.